A 562-amino-acid chain; its full sequence is 3-hydroxy-3-methylglutaryl-coenzyme A reductase 2 (562 aa).

2 helical membrane-spanning segments follow: residues 32 to 56 and 77 to 100; these read ALPL…YFLL and ICAL…DLIF. The interval 101–146 is linker; the sequence is RSSSDDDVWVNDGMIPCNQSLDCREVLPIKPNSVDPPRESELDSVE. Asparagine 118 carries N-linked (GlcNAc...) asparagine glycosylation. The interval 147–562 is catalytic; it reads DEEIVKLVID…DIGPSSQVNR (416 aa). The Charge relay system role is filled by glutamate 240. Asparagine 304 carries an N-linked (GlcNAc...) asparagine glycan. Catalysis depends on charge relay system residues lysine 372 and aspartate 448. The active-site Proton donor is histidine 544. Asparagine 548 carries N-linked (GlcNAc...) asparagine glycosylation. At serine 550 the chain carries Phosphoserine.

The protein belongs to the HMG-CoA reductase family. In terms of tissue distribution, restricted to young seedlings, roots, and inflorescences. Expressed in root tips, shoot apex, secretory zone of the stigma, microspores, mature pollen grains, gynoecium vascular tissue and fertilized ovules.

It localises to the endoplasmic reticulum membrane. The catalysed reaction is (R)-mevalonate + 2 NADP(+) + CoA = (3S)-3-hydroxy-3-methylglutaryl-CoA + 2 NADPH + 2 H(+). The protein operates within metabolic intermediate biosynthesis; (R)-mevalonate biosynthesis; (R)-mevalonate from acetyl-CoA: step 3/3. Regulated at the post-translational level in response to alterations of the sphingolipid and the sterol biosynthetic pathways. In terms of biological role, catalyzes the synthesis of mevalonate. The specific precursor of all isoprenoid compounds present in plants. The protein is 3-hydroxy-3-methylglutaryl-coenzyme A reductase 2 (HMG2) of Arabidopsis thaliana (Mouse-ear cress).